A 418-amino-acid polypeptide reads, in one-letter code: MSEHTDCSVSSEDRVRALTKLGSSVDVSEDVPPRRYFRSGMEIIRMANIYADEGNVEHAFILYNKYITLFIEKLPKHREYKTANIPEKKETMRKLKEIAFPKAEELKKLLLKQYDKEHAEYLVRKRAEDAARAVEMLKQQEQEAQRQRLAELQQRQREQEQFSAFEEMIRRQELEKERRRIVQEFSIPVSPTAPDVLLPDVHGPPQASLSPQTPPAGATNHQGLPAFDRSLKPSVPVSAGHSALVNGLRQLFVPAELCQRFLKLAETNTARAVETCGILCGKLMKNAFTVTHVIVPKQCGGPDYCDTENEEELFLIQDQNDLITLGWIHTHPTQTAFLSSVDLHTHCSYQMMLPESIAIVCSPKFNETGYFRLTDYGMDDVGTCKQRGFHPHPKDPPLFAASHHVSITDGSVTMLDLR.

The segment at 199 to 218 (PDVHGPPQASLSPQTPPAGA) is disordered. Residues 251-382 (LFVPAELCQR…LTDYGMDDVG (132 aa)) form the MPN domain. Residues histidine 329, histidine 331, aspartate 342, histidine 344, cysteine 384, histidine 390, and histidine 392 each contribute to the Zn(2+) site. The JAMM motif motif lies at 329-342 (HTHPTQTAFLSSVD).

Belongs to the peptidase M67C family. Zn(2+) is required as a cofactor.

Its function is as follows. Zinc metalloprotease that specifically cleaves 'Lys-63'-linked polyubiquitin chains. Does not cleave 'Lys-48'-linked polyubiquitin chains. Functions at the endosome and is able to oppose the ubiquitin-dependent sorting of receptors to lysosomes. The chain is STAM-binding protein-like A (stambpa) from Danio rerio (Zebrafish).